Reading from the N-terminus, the 1135-residue chain is Envelopment polyprotein (1135 aa).

An N-terminal signal peptide occupies residues 1–35 (MRILKLLELVVKVSLFTIALSSVLLAFLIFRATDA). Topologically, residues 36 to 314 (KVEIIRGDHP…KYSKSIYKQT (279 aa)) are lumenal. Positions 41 to 43 (RGD) match the Cell attachment site motif. Cystine bridges form between Cys114–Cys145 and Cys122–Cys156. N-linked (GlcNAc...) asparagine; by host glycosylation occurs at Asn116. The tract at residues 177–195 (LDKKRHFSVGGKFFISESL) is non-covalent dimerization. Asn210 carries N-linked (GlcNAc...) asparagine; by host glycosylation. An intrachain disulfide couples Cys224 to Cys285. A helical transmembrane segment spans residues 315-366 (ACINFSWIRLILIALLIYFPIRWLVNKTTKPLFLWYDLMGLITYPVLLLINC). At 367–484 (LWKYFPLKCS…VPGCPFLVTS (118 aa)) the chain is on the cytoplasmic side. A signal for signal peptide peptidase region spans residues 437-484 (LSLSLLKFVTEILIGLVILSQMPMSMAQTTQCLSGCFYVPGCPFLVTS). The Lumenal segment spans residues 485-1067 (KFEKCSEKDQ…YFGSFFDTIR (583 aa)). N-linked (GlcNAc...) asparagine; by host glycans are attached at residues Asn605 and Asn980. A helical membrane pass occupies residues 1068–1088 (VVLLIAFIFLVTYFCSILTSI). At 1089–1135 (CKGYVKNESYKSRSKIEDDDEPEIKAPMLMKDTMTRRRPPMDFSHLV) the chain is on the cytoplasmic side.

Belongs to the tospovirus envelope glycoprotein family. Homodimer; disulfide-linked. Heterodimer with Glycoprotein C. Interacts with nucleoprotein. As to quaternary structure, heterodimer with Glycoprotein N. Interacts with nucleoprotein. Specific enzymatic cleavages in vivo yield mature proteins including Glycoprotein N and Glycoprotein C. In terms of processing, glycosylated with O-linked glycans. Glycosylation is essential for proper subcellular location. Post-translationally, cleaved at acidic pH.

It is found in the virion membrane. It localises to the host Golgi apparatus membrane. Its subcellular location is the host endoplasmic reticulum membrane. In terms of biological role, forms the spikes present at the surface of the virion together with Glycoprotein C. They are able to attach the virion to a cell receptor and to promote fusion of membranes after endocytosis of the virion. Plays a role in virus binding and/or entry into the vector midgut. Forms the spikes present at the surface of the virion together with Glycoprotein N. They are able to attach the virion to a cell receptor and to promote fusion of membranes after endocytosis of the virion. Probable class II fusion protein. The chain is Envelopment polyprotein (GP) from Tomato spotted wilt virus (strain Brazilian Br-01) (TSWV).